The sequence spans 829 residues: DNA topoisomerase 1 (829 aa).

Positions 1–248 (MSEDHVQNDS…AKGNEEGVKK (248 aa)) are disordered. A compositionally biased stretch (basic residues) spans 22–36 (HKHKKDKEHRHKEHK). Composition is skewed to basic and acidic residues over residues 37–58 (KDKDREKSKHNNSEHRDPSEKK), 68–159 (KHRE…EKMK), and 193–220 (KENKAMKRPREDDEDYKPKKIKSEDDKK). Interaction with DNA stretches follow at residues 481-482 (KY), 544-549 (RAGNEK), and 641-643 (TAK). The 334-residue stretch at 488 to 821 (SSRIKGEKDW…SIWQTTTSNF (334 aa)) folds into the Topo IB-type catalytic domain. The O-(3'-phospho-DNA)-tyrosine intermediate role is filled by tyrosine 779.

It belongs to the type IB topoisomerase family. In terms of assembly, monomer.

It localises to the nucleus. The enzyme catalyses ATP-independent breakage of single-stranded DNA, followed by passage and rejoining.. In terms of biological role, releases the supercoiling and torsional tension of DNA introduced during the DNA replication and transcription by transiently cleaving and rejoining one strand of the DNA duplex. Introduces a single-strand break via transesterification at a target site in duplex DNA. The scissile phosphodiester is attacked by the catalytic tyrosine of the enzyme, resulting in the formation of a DNA-(3'-phosphotyrosyl)-enzyme intermediate and the expulsion of a 5'-OH DNA strand. TThe free DNA strand then rotates around the intact phosphodiester bond on the opposing strand, thus removing DNA supercoils. Finally, in the religation step, the DNA 5'-OH attacks the covalent intermediate to expel the active-site tyrosine and restore the DNA phosphodiester backbone. May play a role in the circadian transcription of the core circadian clock component BMAL1. The chain is DNA topoisomerase 1 (top1) from Xenopus laevis (African clawed frog).